We begin with the raw amino-acid sequence, 132 residues long: uncharacterized protein (132 aa).

This is an uncharacterized protein from Homo sapiens (Human).